The chain runs to 326 residues: Neuferricin homolog (326 aa).

An N-terminal signal peptide occupies residues 1-34 (MEKNRRKKDDAGVMTKTLAGVAALTFLVSFICSS). In terms of domain architecture, Cytochrome b5 heme-binding spans 98–197 (KHVFTPEQLH…KEYPLVGVVA (100 aa)).

The protein belongs to the cytochrome b5 family. MAPR subfamily.

It localises to the secreted. Its function is as follows. Heme-binding protein. The protein is Neuferricin homolog of Caenorhabditis briggsae.